Here is a 161-residue protein sequence, read N- to C-terminus: MERLMIEPLTAEAFAPFGDLIDVLGPPDRLINAGLCGRHHDLARLDFDAEGRAGISLFDAQARTLPHVLDLVERHPLGSQAFLPLDGVPFLVCVAEDADGVPVRFRAFLTAPGQGVNILRNCWHGVLAPIGAPGRYAVVDRIGPGANLQEYPLPVPLLVEG.

This sequence belongs to the ureidoglycolate lyase family. In terms of assembly, homodimer. Requires Ni(2+) as cofactor.

It carries out the reaction (S)-ureidoglycolate = urea + glyoxylate. It participates in nitrogen metabolism; (S)-allantoin degradation. Its function is as follows. Catalyzes the catabolism of the allantoin degradation intermediate (S)-ureidoglycolate, generating urea and glyoxylate. Involved in the utilization of allantoin as nitrogen source. The protein is Ureidoglycolate lyase of Rhodobacter capsulatus (strain ATCC BAA-309 / NBRC 16581 / SB1003).